Consider the following 341-residue polypeptide: Antihemorrhagic factor BJ46a (341 aa).

A signal peptide spans methionine 1 to serine 19. 2 consecutive Cystatin fetuin-A-type domains span residues valine 22–histidine 130 and arginine 141–valine 254. Positions arginine 23–aspartate 25 match the Cell attachment site motif. Cystine bridges form between cysteine 28–cysteine 332, cysteine 85–cysteine 96, cysteine 110–cysteine 129, cysteine 143–cysteine 146, cysteine 205–cysteine 217, and cysteine 230–cysteine 253. Asparagine 95 carries an N-linked (GlcNAc...) asparagine glycan. Asparagine 204 carries an N-linked (GlcNAc...) asparagine glycan. N-linked (GlcNAc...) asparagine glycosylation is found at asparagine 282 and asparagine 293.

Homodimer. In terms of tissue distribution, expressed by the liver.

Its subcellular location is the secreted. Functionally, potent inhibitor of hemorrhagic activity but also proteolytic activities of atrolysin C and jararhagin. Inhibition occurs by formation of a non-covalent complex between BJ46a and the proteinases at their metalloproteinase domains. This is Antihemorrhagic factor BJ46a from Bothrops jararaca (Jararaca).